A 222-amino-acid chain; its full sequence is UPF0758 protein Mpe_A2695 (222 aa).

The region spanning 100-222 is the MPN domain; it reads VFDSPQAVKD…VVSFAERGLL (123 aa). H171, H173, and D184 together coordinate Zn(2+). The JAMM motif motif lies at 171–184; that stretch reads HNHPSGVAEPSRAD.

Belongs to the UPF0758 family.

In Methylibium petroleiphilum (strain ATCC BAA-1232 / LMG 22953 / PM1), this protein is UPF0758 protein Mpe_A2695.